Reading from the N-terminus, the 559-residue chain is Tryprostatin B 6-hydroxylase (559 aa).

A run of 3 helical transmembrane segments spans residues 13 to 35 (PSVM…HLSY), 48 to 65 (YVRF…LLYA), and 82 to 104 (VSLL…RTLF). C502 contributes to the heme binding site.

It belongs to the cytochrome P450 family. Heme serves as cofactor.

Its subcellular location is the membrane. It carries out the reaction tryprostatin B + reduced [NADPH--hemoprotein reductase] + O2 = 6-hydroxytryprostatin B + oxidized [NADPH--hemoprotein reductase] + H2O + H(+). Its pathway is mycotoxin biosynthesis. Cytochrome P450 monooxygenase; part of the gene cluster that mediates the biosynthesis of fumitremorgins, indole alkaloids that carry not only intriguing chemical structures, but also interesting biological and pharmacological activities. The biosynthesis of fumitremorgin-type alkaloids begins by condensation of the two amino acids L-tryptophan and L-proline to brevianamide F, catalyzed by the non-ribosomal peptide synthetase ftmA. Brevianamide F is then prenylated by the prenyltransferase ftmPT1/ftmB in the presence of dimethylallyl diphosphate, resulting in the formation of tryprostatin B. The three cytochrome P450 monooxygenases, ftmP450-1/ftmC, ftmP450-2/ftmE and ftmP450-3/FtmG, are responsible for the conversion of tryprostatin B to 6-hydroxytryprostatin B, tryprostatin A to fumitremorgin C and fumitremorgin C to 12,13-dihydroxyfumitremorgin C, respectively. The putative methyltransferase ftmMT/ftmD is expected for the conversion of 6-hydroxytryprostatin B to tryprostatin A. FtmPT2/FtmH catalyzes the prenylation of 12,13-dihydroxyfumitre-morgin C in the presence of dimethylallyl diphosphate, resulting in the formation of fumitremorgin B. Fumitremorgin B is further converted to verruculogen by ftmOx1/ftmF via the insertion of an endoperoxide bond between the two prenyl moieties. In some fungal species, verruculogen is further converted to fumitremorgin A, but the enzymes involved in this step have not been identified yet. In Aspergillus fumigatus (Neosartorya fumigata), this protein is Tryprostatin B 6-hydroxylase.